Reading from the N-terminus, the 203-residue chain is Dephospho-CoA kinase (203 aa).

The DPCK domain occupies 3 to 202; sequence KIGLTGSIGM…MRIAKGDFRN (200 aa). 11-16 serves as a coordination point for ATP; sequence GMGKST.

The protein belongs to the CoaE family.

It is found in the cytoplasm. It carries out the reaction 3'-dephospho-CoA + ATP = ADP + CoA + H(+). It functions in the pathway cofactor biosynthesis; coenzyme A biosynthesis; CoA from (R)-pantothenate: step 5/5. Its function is as follows. Catalyzes the phosphorylation of the 3'-hydroxyl group of dephosphocoenzyme A to form coenzyme A. In Rhizobium etli (strain ATCC 51251 / DSM 11541 / JCM 21823 / NBRC 15573 / CFN 42), this protein is Dephospho-CoA kinase.